Consider the following 349-residue polypeptide: MNKPRYFKEAFAQLKPYEPHLVSYEIKLDANENPYLFPKSLLEEIFSKIGTRDFPLYPDPLAGRLRIRLSEKLGVLPENIVLGNGSDELILCLYLAFGGYGRIALSFSPSFVMYRHHAFVTQTEFFEVSYRDDFSLDLDETKKAIEKYQPHLVFLANPNNPTGTLVDIETIKKLLAYDHLLVVDEAYVEFSGVSAIDLLKKYQNLVILRTFSKARALAGLRLGYLVASVDVVKEIIKVKNPYNVNVFSQIAGEVVLANEEVFQGEIKEIVAERERLYNQLASLGLKPVKSHANFILVEFGEKAKKIHQELINHGILVRYLGGALANYLRITVGTPEENRQLLKKLGEIL.

Residue Lys213 is modified to N6-(pyridoxal phosphate)lysine.

This sequence belongs to the class-II pyridoxal-phosphate-dependent aminotransferase family. Histidinol-phosphate aminotransferase subfamily. As to quaternary structure, homodimer. Requires pyridoxal 5'-phosphate as cofactor.

It catalyses the reaction L-histidinol phosphate + 2-oxoglutarate = 3-(imidazol-4-yl)-2-oxopropyl phosphate + L-glutamate. It functions in the pathway amino-acid biosynthesis; L-histidine biosynthesis; L-histidine from 5-phospho-alpha-D-ribose 1-diphosphate: step 7/9. The polypeptide is Histidinol-phosphate aminotransferase 1 (Carboxydothermus hydrogenoformans (strain ATCC BAA-161 / DSM 6008 / Z-2901)).